Reading from the N-terminus, the 432-residue chain is Serine/threonine-protein kinase stk11 (432 aa).

Positions 52–312 (YLMGDLLGEG…IQQIRQHNWF (261 aa)) constitute a Protein kinase domain. ATP-binding positions include 58–66 (LGEGSYGKV) and K81. Residue D179 is the Proton acceptor of the active site. T192 carries the phosphothreonine; by autocatalysis modification. Residues 398–432 (TESQLKTERRVSSSSQRKASTTGSKVRKLSACKQQ) form a disordered region. The segment covering 409-421 (SSSSQRKASTTGS) has biased composition (polar residues). Basic residues predominate over residues 422 to 432 (KVRKLSACKQQ). S427 is modified (phosphoserine; by PKA).

Belongs to the protein kinase superfamily. CAMK Ser/Thr protein kinase family. LKB1 subfamily. As to quaternary structure, catalytic component of a trimeric complex composed of STK11/LKB1, STRAD (STRADA or STRADB) and CAB39/MO25 (CAB39/MO25alpha or CAB39L/MO25beta). Mg(2+) serves as cofactor. The cofactor is Mn(2+). Phosphorylated by a cAMP-dependent protein kinase. Autophosphorylated in a reaction that prefers Mn(2+) to Mg(2+). Oocytes, eggs and early embryos.

The protein localises to the nucleus. It localises to the cytoplasm. The enzyme catalyses L-seryl-[protein] + ATP = O-phospho-L-seryl-[protein] + ADP + H(+). The catalysed reaction is L-threonyl-[protein] + ATP = O-phospho-L-threonyl-[protein] + ADP + H(+). Functionally, tumor suppressor serine/threonine-protein kinase that controls the activity of AMP-activated protein kinase (AMPK) family members, thereby playing a role in various processes such as cell metabolism, cell polarity, apoptosis and DNA damage response. Acts by phosphorylating the T-loop of AMPK family proteins, leading to promote their activity. This is Serine/threonine-protein kinase stk11 from Xenopus laevis (African clawed frog).